The chain runs to 115 residues: Large ribosomal subunit protein bL19 (115 aa).

Belongs to the bacterial ribosomal protein bL19 family.

This protein is located at the 30S-50S ribosomal subunit interface and may play a role in the structure and function of the aminoacyl-tRNA binding site. The sequence is that of Large ribosomal subunit protein bL19 from Citrobacter koseri (strain ATCC BAA-895 / CDC 4225-83 / SGSC4696).